We begin with the raw amino-acid sequence, 215 residues long: Transmembrane protein 267 (215 aa).

A run of 3 helical transmembrane segments spans residues 77-97, 114-134, and 178-198; these read FGEIILAGFLASVIDIDHFLL, FLHCSTVIPTVVLTLKFTMHF, and FWLYVIITSSLPHICSFVMYF.

Its subcellular location is the membrane. The polypeptide is Transmembrane protein 267 (TMEM267) (Bos taurus (Bovine)).